The primary structure comprises 528 residues: Chaperonin GroEL, chloroplastic (528 aa).

ATP-binding positions include 29-32 (TLGP), 86-90 (DGTTT), Gly414, 480-482 (DAA), and Asp496.

The protein belongs to the chaperonin (HSP60) family. In terms of assembly, forms a cylinder of 14 subunits composed of two heptameric rings stacked back-to-back. Interacts with the co-chaperonin GroES.

Its subcellular location is the plastid. It is found in the chloroplast. The enzyme catalyses ATP + H2O + a folded polypeptide = ADP + phosphate + an unfolded polypeptide.. Together with its co-chaperonin GroES, plays an essential role in assisting protein folding. The GroEL-GroES system forms a nano-cage that allows encapsulation of the non-native substrate proteins and provides a physical environment optimized to promote and accelerate protein folding. The protein is Chaperonin GroEL, chloroplastic of Pyropia yezoensis (Susabi-nori).